The following is a 1038-amino-acid chain: Translation initiation factor IF-2 (1038 aa).

The segment at 48–426 (DALQGPGGNA…RQRRQEYEAM (379 aa)) is disordered. Over residues 58–87 (GKSAAKPGAPRKAAPAKPAAPSPAAAARPA) the composition is skewed to low complexity. Residues 88–99 (APKPGAPAPKPA) show a composition bias toward pro residues. The span at 100–114 (EAPSSTPAAPSAPSA) shows a compositional bias: low complexity. The span at 115-125 (GPRPGPKPAPK) shows a compositional bias: pro residues. The segment covering 126 to 141 (AAPVTPVPAAEFSAPA) has biased composition (low complexity). Residues 142-153 (PAQPAAPQPQAP) show a composition bias toward pro residues. Positions 177-199 (DGGRDGGQRDGGRGGERGGDRPA) are enriched in basic and acidic residues. Over residues 200-219 (RPAGQGAPRPGGARPAGPRP) the composition is skewed to low complexity. A compositionally biased stretch (gly residues) spans 261-277 (SGPGGAPRPQGGQGQGG). The span at 299–315 (GNRPNPGMMPQRPAAGP) shows a compositional bias: low complexity. A compositionally biased stretch (gly residues) spans 319-406 (PGGGGRGPGG…GTQGAFGRPG (88 aa)). Residues 410–419 (RRGRKSKRQR) are compositionally biased toward basic residues. The tr-type G domain maps to 531 to 703 (SRPPVVTVMG…VVLTADASLD (173 aa)). Residues 540–547 (GHVDHGKT) are G1. Residue 540 to 547 (GHVDHGKT) participates in GTP binding. Positions 565 to 569 (GITQH) are G2. Residues 590 to 593 (DTPG) form a G3 region. Residues 590–594 (DTPGH) and 644–647 (NKID) contribute to the GTP site. Positions 644–647 (NKID) are G4. Positions 680–682 (SAK) are G5.

Belongs to the TRAFAC class translation factor GTPase superfamily. Classic translation factor GTPase family. IF-2 subfamily.

It localises to the cytoplasm. Its function is as follows. One of the essential components for the initiation of protein synthesis. Protects formylmethionyl-tRNA from spontaneous hydrolysis and promotes its binding to the 30S ribosomal subunits. Also involved in the hydrolysis of GTP during the formation of the 70S ribosomal complex. This chain is Translation initiation factor IF-2, found in Streptomyces griseus subsp. griseus (strain JCM 4626 / CBS 651.72 / NBRC 13350 / KCC S-0626 / ISP 5235).